The primary structure comprises 120 residues: Aspartate 1-decarboxylase (120 aa).

The Schiff-base intermediate with substrate; via pyruvic acid role is filled by Ser-25. Ser-25 is modified (pyruvic acid (Ser)). Position 57 (Thr-57) interacts with substrate. Tyr-58 serves as the catalytic Proton donor. 73 to 75 (GAA) contacts substrate.

The protein belongs to the PanD family. In terms of assembly, heterooctamer of four alpha and four beta subunits. Pyruvate is required as a cofactor. Is synthesized initially as an inactive proenzyme, which is activated by self-cleavage at a specific serine bond to produce a beta-subunit with a hydroxyl group at its C-terminus and an alpha-subunit with a pyruvoyl group at its N-terminus.

Its subcellular location is the cytoplasm. The catalysed reaction is L-aspartate + H(+) = beta-alanine + CO2. The protein operates within cofactor biosynthesis; (R)-pantothenate biosynthesis; beta-alanine from L-aspartate: step 1/1. Its function is as follows. Catalyzes the pyruvoyl-dependent decarboxylation of aspartate to produce beta-alanine. In Ralstonia nicotianae (strain ATCC BAA-1114 / GMI1000) (Ralstonia solanacearum), this protein is Aspartate 1-decarboxylase.